A 3214-amino-acid polypeptide reads, in one-letter code: Ciliogenesis and planar polarity effector 1 (3214 aa).

2 consecutive transmembrane segments (helical) span residues 593-613 (KLML…LQFI) and 632-652 (AWVL…YWDM). Disordered regions lie at residues 1496–1523 (VGKK…ETPG), 1644–1667 (GNQS…PLQS), 1879–1991 (DGRH…HRAQ), 2047–2142 (FGES…FPPA), 2214–2241 (SLSD…SSHC), 2398–2440 (GITQ…ISND), 2491–2529 (GSHD…GHEP), 2622–2650 (TFQS…QSGE), 2824–2855 (VSLQ…HSSQ), 3037–3127 (TAPA…CRED), and 3158–3181 (MSPA…VSES). The segment covering 1512–1523 (NSQRKEDDETPG) has biased composition (basic and acidic residues). Over residues 1932–1942 (QCSRKEPRDAS) the composition is skewed to basic and acidic residues. Composition is skewed to polar residues over residues 1943-1953 (VDTNLTEQKGA), 1971-1984 (NGAQ…QKTQ), and 2047-2068 (FGES…SRQR). Residues 2079-2099 (CTREPGKNSPADHKRISRPDQ) are compositionally biased toward basic and acidic residues. The span at 2215-2241 (LSDSCQPPVSQRTVHTTLPSPSDSSHC) shows a compositional bias: polar residues. Residues 2500-2514 (DPDKEGPSQKADSES) are compositionally biased toward basic and acidic residues. 2 stretches are compositionally biased toward polar residues: residues 2515-2524 (SKNPQATAAS) and 2622-2634 (TFQS…STRG). Positions 2830 to 2848 (EDVEEQKDAEETSETEFSE) are enriched in acidic residues. Over residues 3090–3107 (RGSSQLRGSQPPCQSQKP) the composition is skewed to polar residues.

In terms of assembly, interacts with FUZ; INTU and WDPCP; the interactors are proposed to form the core CPLANE (ciliogenesis and planar polarity effectors) complex.

The protein localises to the membrane. It localises to the cell projection. It is found in the cilium. Involved in ciliogenesis. Involved in the establishment of cell polarity required for directional cell migration. Proposed to act in association with the CPLANE (ciliogenesis and planar polarity effectors) complex. Involved in recruitment of peripheral IFT-A proteins to basal bodies. This chain is Ciliogenesis and planar polarity effector 1, found in Mus musculus (Mouse).